The sequence spans 324 residues: Zinc transporter ZIP1 (324 aa).

Over 1 to 30 (MGPWGEPELLVWRPEAVASEPSVPVGLEVK) the chain is Extracellular. Residues 31 to 51 (LGALVLLLLLTLICSLVPVCV) form a helical membrane-spanning segment. The Cytoplasmic segment spans residues 52-68 (LRRSGANHEASASGQKA). Residues 69–89 (LSLVSCFAGGVFLATCLLDLL) traverse the membrane as a helical segment. The Extracellular portion of the chain corresponds to 90–104 (PDYLAAIDEALEALH). A helical membrane pass occupies residues 105 to 125 (VTLQFPLQEFILAMGFFLVLV). The Cytoplasmic segment spans residues 126–179 (MEQITLAYKEQTSPPHPEETRALLGTVNGGPQHWHDGPGIPQAGGTPAAPSALR). A helical transmembrane segment spans residues 180 to 200 (ACVLVFSLALHSVFEGLAVGL). The Extracellular segment spans residues 201-206 (QRDRAR). Residues 207–227 (AMELCLALLLHKGILAVSLSL) traverse the membrane as a helical segment. The Cytoplasmic portion of the chain corresponds to 228 to 237 (RLLQSHLRVQ). A helical transmembrane segment spans residues 238–258 (VVAGCGILFSCMTPLGIGLGA). Residues 259–272 (ALAESAGPLHQLAQ) are Extracellular-facing. A helical membrane pass occupies residues 273–293 (SVLEGMAAGTFLYITFLEILP). The Cytoplasmic segment spans residues 294–303 (QELATSEQRI). The helical transmembrane segment at 304-324 (LKVILLLAGFALLTGLLFVQI) threads the bilayer.

The protein belongs to the ZIP transporter (TC 2.A.5) family. In terms of tissue distribution, ubiquitous, except in the pancreas. Highest levels seen in kidney, salivary gland and placenta.

It is found in the cell membrane. It localises to the endoplasmic reticulum membrane. It carries out the reaction Zn(2+)(in) = Zn(2+)(out). Transporter for the divalent cation Zn(2+). Mediates the influx of Zn(2+) into cells from extracellular space. The sequence is that of Zinc transporter ZIP1 (Slc39a1) from Mus musculus (Mouse).